Here is a 790-residue protein sequence, read N- to C-terminus: DNA topoisomerase 1 (790 aa).

Polar residues-rich tracts occupy residues 1–18 (MKSN…SNVM), 44–54 (KLSSGALNGNS), and 61–70 (SNLSCPSPYT). The disordered stretch occupies residues 1 to 196 (MKSNPGITVI…KKRPDVSASV (196 aa)). Acidic residues predominate over residues 158-167 (QEEAAADDDP). Residues 168–181 (SISNRNKKSTTPAS) are compositionally biased toward polar residues. Interaction with DNA regions lie at residues 426–427 (KY), 490–495 (RAGNEK), and 581–583 (TAK). Residues 433–790 (SSSLKGKVTR…AMDVVLIFRF (358 aa)) form the Topo IB-type catalytic domain. The active-site O-(3'-phospho-DNA)-tyrosine intermediate is the Tyr749.

This sequence belongs to the type IB topoisomerase family.

The protein resides in the nucleus. It catalyses the reaction ATP-independent breakage of single-stranded DNA, followed by passage and rejoining.. In terms of biological role, releases the supercoiling and torsional tension of DNA introduced during the DNA replication and transcription by transiently cleaving and rejoining one strand of the DNA duplex. Introduces a single-strand break via transesterification at a target site in duplex DNA. The scissile phosphodiester is attacked by the catalytic tyrosine of the enzyme, resulting in the formation of a DNA-(3'-phosphotyrosyl)-enzyme intermediate and the expulsion of a 5'-OH DNA strand. The free DNA strand then rotates around the intact phosphodiester bond on the opposing strand, thus removing DNA supercoils. Finally, in the religation step, the DNA 5'-OH attacks the covalent intermediate to expel the active-site tyrosine and restore the DNA phosphodiester backbone. This Daucus carota (Wild carrot) protein is DNA topoisomerase 1 (TOP1).